A 431-amino-acid chain; its full sequence is Glucose-1-phosphate adenylyltransferase (431 aa).

Residue K39 participates in beta-D-fructose 1,6-bisphosphate binding. Positions 40, 46, and 52 each coordinate AMP. Y114 lines the alpha-D-glucose 1-phosphate pocket. AMP is bound at residue R130. Alpha-D-glucose 1-phosphate-binding positions include G179, 194–195 (EK), and S212. E370 and R386 together coordinate AMP. Residues 419-423 (REMLR) and 429-431 (QER) each bind beta-D-fructose 1,6-bisphosphate.

Belongs to the bacterial/plant glucose-1-phosphate adenylyltransferase family. In terms of assembly, homotetramer.

The enzyme catalyses alpha-D-glucose 1-phosphate + ATP + H(+) = ADP-alpha-D-glucose + diphosphate. It participates in glycan biosynthesis; glycogen biosynthesis. Allosterically activated by fructose-1,6-bisphosphate (F16BP) and inhibited by AMP. Functionally, involved in the biosynthesis of ADP-glucose, a building block required for the elongation reactions to produce glycogen. Catalyzes the reaction between ATP and alpha-D-glucose 1-phosphate (G1P) to produce pyrophosphate and ADP-Glc. In Shigella dysenteriae serotype 1 (strain Sd197), this protein is Glucose-1-phosphate adenylyltransferase.